Here is a 95-residue protein sequence, read N- to C-terminus: Scorpine-like peptide Smp76 (95 aa).

Residues 1–19 (MNCKLTALLFLGLIVIASC) form the signal peptide. Residues 55–95 (EFQCVANVDTLGNCKKHCAKTTGEKGYCHGTKCKCGIELSY) enclose the BetaSPN-type CS-alpha/beta domain. Intrachain disulfides connect Cys-58–Cys-82, Cys-68–Cys-87, and Cys-72–Cys-89.

Post-translationally, disulfide bonds are critical for antiviral function, and their disruption inhibit viral activity. Expressed by the venom gland.

The protein resides in the secreted. In terms of biological role, antibacterial peptide. Dose-dependently inhibits Dengue virus (DENV), Zika virus (ZIKV) and Hepatitis C virus (HCV) infections. Two mechanisms of action have been described by two different groups: one involving activity on extracellular particles, and the other regulating the immune system. On Dengue virus (DENV), Zika virus (ZIKV), suppress the established viral infection, similar to the effect of interferon (IFN)-beta. Mechanistically, upregulates the expression of IFN-beta by activating interferon regulatory transcription factor 3 (IRF3) phosphorylation. On HCV and DENV, acts by inactivating extra-cellular infectious particles without affecting viral replication. Shows very weak inhibition on measles virus. Is neither toxic nor hemolytic in vitro at high concentrations. The chain is Scorpine-like peptide Smp76 from Scorpio palmatus (Israeli golden scorpion).